We begin with the raw amino-acid sequence, 449 residues long: Phosphoglucosamine mutase (449 aa).

Serine 101 (phosphoserine intermediate) is an active-site residue. The Mg(2+) site is built by serine 101, aspartate 241, aspartate 243, and aspartate 245. Residue serine 101 is modified to Phosphoserine.

It belongs to the phosphohexose mutase family. It depends on Mg(2+) as a cofactor. In terms of processing, activated by phosphorylation.

It catalyses the reaction alpha-D-glucosamine 1-phosphate = D-glucosamine 6-phosphate. Functionally, catalyzes the conversion of glucosamine-6-phosphate to glucosamine-1-phosphate. This Acetivibrio thermocellus (strain ATCC 27405 / DSM 1237 / JCM 9322 / NBRC 103400 / NCIMB 10682 / NRRL B-4536 / VPI 7372) (Clostridium thermocellum) protein is Phosphoglucosamine mutase.